We begin with the raw amino-acid sequence, 94 residues long: MASSSTEGQAAARGRKKSWTGKVVSDSMDKAIIVAVERRVQHPVYKKYFKKTTRLMAHDEKNEAGMGDLVKVVECRPLSKRKSCRLVEIVEKAK.

Residues 1–22 (MASSSTEGQAAARGRKKSWTGK) are disordered.

The protein belongs to the universal ribosomal protein uS17 family. Part of the 30S ribosomal subunit.

Its function is as follows. One of the primary rRNA binding proteins, it binds specifically to the 5'-end of 16S ribosomal RNA. The sequence is that of Small ribosomal subunit protein uS17 from Chlorobium luteolum (strain DSM 273 / BCRC 81028 / 2530) (Pelodictyon luteolum).